We begin with the raw amino-acid sequence, 184 residues long: Large ribosomal subunit protein uL6 (184 aa).

This sequence belongs to the universal ribosomal protein uL6 family. As to quaternary structure, part of the 50S ribosomal subunit.

Functionally, this protein binds to the 23S rRNA, and is important in its secondary structure. It is located near the subunit interface in the base of the L7/L12 stalk, and near the tRNA binding site of the peptidyltransferase center. The polypeptide is Large ribosomal subunit protein uL6 (Thermotoga maritima (strain ATCC 43589 / DSM 3109 / JCM 10099 / NBRC 100826 / MSB8)).